The sequence spans 747 residues: Zinc finger and BTB domain-containing protein 47 (747 aa).

The 69-residue stretch at 15 to 83 folds into the BTB domain; it reads CDVDLVLVPQ…IYTSKLLVNA (69 aa). A Glycyl lysine isopeptide (Lys-Gly) (interchain with G-Cter in SUMO2) cross-link involves residue K190. The segment at 243-424 is disordered; it reads QTLHVSTGPE…ARGPPATDGL (182 aa). Positions 267 to 277 are enriched in basic and acidic residues; that stretch reads GREDGLQRHSD. Residues 278 to 354 are compositionally biased toward acidic residues; that stretch reads EEEEDDEEEE…SEEEEGEEGE (77 aa). A compositionally biased stretch (basic and acidic residues) spans 380-398; sequence RSRENARRRGTPEPEEAGR. The segment at 436 to 459 adopts a C2H2-type 1 zinc-finger fold; sequence HPCQKCPRVFNNRWYLEKHMNVTH. The C2H2-type 2; degenerate zinc finger occupies 463–485; that stretch reads QICDQCGKRFLLESELLLHRQTD. 7 C2H2-type zinc fingers span residues 490–513, 520–542, 548–570, 576–598, 604–626, 632–654, and 660–687; these read IQCV…KIVH, FSCE…MVAH, FTCE…SLQH, FRCE…MSIH, FMCQ…MKTH, YICE…RRTH, and YPCD…RVSH. The disordered stretch occupies residues 694-747; it reads VPAAPGLPPTQPQAHALPLLPGLPQTLPPPPHLPPPPPLFPTTASPGGRMNANN. The span at 719–733 shows a compositional bias: pro residues; that stretch reads TLPPPPHLPPPPPLF.

This sequence belongs to the krueppel C2H2-type zinc-finger protein family.

It is found in the nucleus. In terms of biological role, may be involved in transcriptional regulation. This Homo sapiens (Human) protein is Zinc finger and BTB domain-containing protein 47 (ZBTB47).